A 476-amino-acid polypeptide reads, in one-letter code: Efflux pump atB (476 aa).

Residues 1-38 form a disordered region; that stretch reads MAPQLAGSSHSSSASDQAHRQSSDPALESGSDTHVGSI. 10 helical membrane-spanning segments follow: residues 69 to 89, 96 to 116, 127 to 147, 186 to 206, 264 to 284, 294 to 314, 347 to 367, 372 to 392, 403 to 425, and 440 to 460; these read LIVAIVSSTRLGLSPMILAPL, KPVYVVSMFFFVVWIIPCAVA, FFNGFAGAAFLSVAGGTVGDL, WSFYILLIWAFAQWVSISLLV, LLLCLFCSVLLGVLYLFFGAF, FNLWQVGLSFLGITVGMIIGI, LPPAVGGAPLVTIGLLWFAWT, VHWIVPIIGSGIFGAGVIMIF, YPLYAASALAANSFSRSMFAAAF, and WAGFLLAMITLLLAPFPYIFY.

This sequence belongs to the major facilitator superfamily.

The protein resides in the cell membrane. Functionally, efflux pump that might be required for efficient secretion of terreic acid. The chain is Efflux pump atB from Aspergillus terreus (strain NIH 2624 / FGSC A1156).